An 89-amino-acid polypeptide reads, in one-letter code: Ubiquinol-cytochrome-c reductase complex assembly factor 3 (89 aa).

Topologically, residues 1–7 (MEVARKA) are mitochondrial matrix. Residues 8–28 (LVAVAVLGGGAGVGSILFALV) form a helical membrane-spanning segment. Residues 23-80 (ILFALVTPGELQKQSMLQEMPERDSRRRDEAVRTTELVMATLKDAAATKENVAWRRNW) are mediates lipid-binding. Over 29–89 (TPGELQKQSM…WTVSGDGRSA (61 aa)) the chain is Mitochondrial intermembrane.

This sequence belongs to the UQCC3 family. In terms of assembly, associates with the ubiquinol-cytochrome c reductase complex (mitochondrial respiratory chain complex III(CIII) or cytochrome b-c1 complex). Interacts with UQCC1. Forms a complex, named COMC, composed of UQCC1, UQCC2; UQCC3 and UQCC4; mediates MT-CYB hemylation and association with the first nuclear-encoded complex III subunit UQCRQ. In terms of processing, probably cleaved by OMA1 under mitochondrial stress conditions.

Its subcellular location is the mitochondrion inner membrane. In terms of biological role, required for the assembly of the ubiquinol-cytochrome c reductase complex (mitochondrial respiratory chain complex III or cytochrome b-c1 complex), mediating cytochrome b recruitment and probably stabilization within the complex. Thereby, plays an important role in ATP production by mitochondria. Cardiolipin-binding protein, it may also control the cardiolipin composition of mitochondria membranes and their morphology. This is Ubiquinol-cytochrome-c reductase complex assembly factor 3 from Mus musculus (Mouse).